A 566-amino-acid chain; its full sequence is Putative pentatricopeptide repeat-containing protein At1g28020 (566 aa).

PPR repeat units lie at residues 136–171, 172–206, 207–242, 243–273, 279–309, 314–348, 349–385, 468–504, and 505–540; these read GDSV…GLLL, RPVP…DVEA, DNVT…GIKL, EWHT…TEQL, LKSA…YKSK, DNNG…PLEF, DHRI…RMNK, DYSV…NVDP, and DLIT…GIKL.

It belongs to the PPR family. P subfamily.

This Arabidopsis thaliana (Mouse-ear cress) protein is Putative pentatricopeptide repeat-containing protein At1g28020.